A 172-amino-acid chain; its full sequence is Transcription factor MafF (172 aa).

The basic motif stretch occupies residues Arg51–Lys76. In terms of domain architecture, bZIP spans Arg51 to Leu114. The segment at Leu79–Leu93 is leucine-zipper. The interval Val140 to Ser172 is disordered. Residues Ser145–Ser172 are compositionally biased toward pro residues.

It belongs to the bZIP family. Maf subfamily. Monomer and homo- or heterodimer. Interacts with MIP. Forms high affinity heterodimers with members of the CNC-bZIP family such as NFE2L1/NRF1.

Its subcellular location is the nucleus. Its function is as follows. Since they lack a putative transactivation domain, the small Mafs behave as transcriptional repressors when they dimerize among themselves. However, they seem to serve as transcriptional activators by dimerizing with other (usually larger) basic-zipper proteins, such as NFE2L1/NRF1, and recruiting them to specific DNA-binding sites. Interacts with the upstream promoter region of the oxytocin receptor gene. May be a transcriptional enhancer in the up-regulation of the oxytocin receptor gene at parturition. This Bos taurus (Bovine) protein is Transcription factor MafF (MAFF).